The chain runs to 400 residues: MTTFQPGRLAGQLAATALLAATCSAFAADAPTTVPSSLGAIGTTPTLDNITMEPGLPSDAKRVYVLDPGHFHVTTTVYTIDGNKNNLLGMTDTGKLANVMLSSDGKFFVTSNTTYSRIARGKRDDYVEVIDAQSHKVLADIDIPEGRFLTGVMNRMASLSTDNKYMLFQQFAPSPAVGLVDLEKKSFVKMMDIPDCYQIFPVPNQSFYMHCRDGSLQQFGYDDKGNLKPMKPTKVFHGEDDYLFVNPYYSNGSGRLVWPTYEGRIFQAKLTDKKVDFMKPFELFTEAEKKANWRPGGWQVVAYHKARNEIYVLADQRAKWTHVTASRYVFVVDGTTGKRLRRIDLGHEIDGISVTQDANPNLYAVSAEAKTLFTFNAVTGKETGKVDELGRAPTISLTMD.

The signal sequence occupies residues 1 to 27 (MTTFQPGRLAGQLAATALLAATCSAFA).

This sequence belongs to the aromatic amine dehydrogenase heavy chain family. In terms of assembly, tetramer of two light and two heavy chains.

The protein localises to the periplasm. The catalysed reaction is 2 oxidized [amicyanin] + methylamine + H2O = 2 reduced [amicyanin] + formaldehyde + NH4(+) + 2 H(+). Its function is as follows. Methylamine dehydrogenase carries out the oxidation of methylamine. Electrons are passed from methylamine dehydrogenase to amicyanin. This Methylobacillus flagellatus (strain ATCC 51484 / DSM 6875 / VKM B-1610 / KT) protein is Methylamine dehydrogenase heavy chain (mauB).